The sequence spans 459 residues: Transcriptional coactivator YAP1-A (459 aa).

Residues 1 to 13 (MEPGSQQQPSAPA) show a composition bias toward low complexity. The interval 1-22 (MEPGSQQQPSAPAQQPPPVGHQ) is disordered. Residues serine 30, serine 80, serine 98, and serine 134 each carry the phosphoserine; by LATS1 and LATS2 modification. Disordered regions lie at residues 65–99 (FKQP…AHSS) and 126–145 (SAPH…PLPP). WW domains follow at residues 141 to 174 (VPLP…DPRK) and 199 to 232 (GPLP…DPRL). Positions 246-268 (NAPVKAPPALPPPSPQTGVLGSG) are disordered. The span at 250 to 260 (KAPPALPPPSP) shows a compositional bias: pro residues. The interval 261–459 (QTGVLGSGGN…LDKESFLTWL (199 aa)) is transactivation domain. Positions 269–297 (GNQQMRLQQLQMEKERLRLKHQELLRQVR) form a coiled coil. The segment at 344–363 (GTYHSRDESTESGLSMSSYS) is disordered. A compositionally biased stretch (polar residues) spans 354–363 (ESGLSMSSYS).

It belongs to the YAP1 family. Interacts with tead1. In terms of processing, phosphorylated by lats1 and lats2; leading to cytoplasmic translocation and inactivation.

The protein resides in the cytoplasm. Its subcellular location is the nucleus. The protein localises to the cell junction. It is found in the tight junction. It localises to the cell membrane. Its function is as follows. Transcriptional regulator which can act both as a coactivator and a corepressor and is the critical downstream regulatory target in the Hippo signaling pathway that plays a pivotal role in organ size control and tumor suppression by restricting proliferation and promoting apoptosis. Plays a key role in tissue tension and 3D tissue shape by regulating cortical actomyosin network formation. Required for expansion of the neural plate and neural plate border zone progenitor pools. Acts as a direct regulator of pax3 expression via interaction with tead1. The sequence is that of Transcriptional coactivator YAP1-A from Xenopus laevis (African clawed frog).